The chain runs to 561 residues: Developmental and secondary metabolism regulator veA (561 aa).

3 disordered regions span residues 1–23 (MANR…RITR), 41–60 (ARAC…VDPP), and 258–361 (AYAR…PQGI). Basic and acidic residues predominate over residues 12-23 (NETEHSVSRITR). The Velvet domain maps to 25–233 (GKQLTYKLSV…AEQGCRVRIR (209 aa)). Positions 39–44 (ERARAC) match the Nuclear localization signal motif. Over residues 258 to 268 (AYARSSDRFTT) the composition is skewed to basic and acidic residues. A compositionally biased stretch (polar residues) spans 324–339 (SHSQTPSYQSHLSFGS). Residues 347–357 (PHMPPTPPPVA) are compositionally biased toward pro residues. The PEST stretch occupies residues 438–485 (RPQTPNLPAMPPPKPLSNDYANHVVPSVECTSPGGSGGGGYDNVRGKR). The segment at 491-524 (GPTYGKRSHEDTFGLDDRSMQNGMRPDTEPYPAY) is disordered. The segment covering 497 to 509 (RSHEDTFGLDDRS) has biased composition (basic and acidic residues).

It belongs to the velvet family. VeA subfamily. In terms of assembly, component of the heterotrimeric velvet complex composed of laeA, veA and velB; velA acting as a bridging protein between laeA and velB. Interacts with kapA. Interacts with vosA and velc.

It is found in the nucleus. It localises to the cytoplasm. Functionally, component of the velvet transcription factor complex that controls sexual/asexual developmental ratio in response to light, promoting sexual development in the darkness while stimulating asexual sporulation under illumination. The velvet complex acts as a global regulator for secondary metabolite gene expression. Controls the expression of the penicillin gene cluster. Positively controls the expression of the class V chitinase chiB1. Positively controls the expression of the transcription factor atfA. Required for cell wall integrity and controls hyphal branching. In Penicillium rubens (strain ATCC 28089 / DSM 1075 / NRRL 1951 / Wisconsin 54-1255) (Penicillium chrysogenum), this protein is Developmental and secondary metabolism regulator veA.